Consider the following 120-residue polypeptide: Ribosome-binding factor A (120 aa).

This sequence belongs to the RbfA family. As to quaternary structure, monomer. Binds 30S ribosomal subunits, but not 50S ribosomal subunits or 70S ribosomes.

The protein resides in the cytoplasm. Functionally, one of several proteins that assist in the late maturation steps of the functional core of the 30S ribosomal subunit. Associates with free 30S ribosomal subunits (but not with 30S subunits that are part of 70S ribosomes or polysomes). Required for efficient processing of 16S rRNA. May interact with the 5'-terminal helix region of 16S rRNA. In Rickettsia felis (strain ATCC VR-1525 / URRWXCal2) (Rickettsia azadi), this protein is Ribosome-binding factor A.